An 88-amino-acid chain; its full sequence is Elongation factor 1-beta (88 aa).

It belongs to the EF-1-beta/EF-1-delta family.

In terms of biological role, promotes the exchange of GDP for GTP in EF-1-alpha/GDP, thus allowing the regeneration of EF-1-alpha/GTP that could then be used to form the ternary complex EF-1-alpha/GTP/AAtRNA. In Haloarcula marismortui (strain ATCC 43049 / DSM 3752 / JCM 8966 / VKM B-1809) (Halobacterium marismortui), this protein is Elongation factor 1-beta.